The primary structure comprises 347 residues: NADH-ubiquinone oxidoreductase chain 2 (347 aa).

Helical transmembrane passes span 3-23 (PLAL…TMMS), 59-79 (YFMT…INLM), 93-115 (VASN…HFWV), 150-170 (NTNL…WGGL), 178-198 (ILAY…PFNP), 200-220 (LTLL…MILA), 240-260 (MTIM…LSGF), 274-294 (NSII…YFYT), and 326-346 (LPTL…ISML).

Belongs to the complex I subunit 2 family. In terms of assembly, core subunit of respiratory chain NADH dehydrogenase (Complex I) which is composed of 45 different subunits. Interacts with TMEM242.

Its subcellular location is the mitochondrion inner membrane. The enzyme catalyses a ubiquinone + NADH + 5 H(+)(in) = a ubiquinol + NAD(+) + 4 H(+)(out). Its function is as follows. Core subunit of the mitochondrial membrane respiratory chain NADH dehydrogenase (Complex I) which catalyzes electron transfer from NADH through the respiratory chain, using ubiquinone as an electron acceptor. Essential for the catalytic activity and assembly of complex I. This is NADH-ubiquinone oxidoreductase chain 2 from Elephas maximus (Indian elephant).